The following is a 125-amino-acid chain: Mini-ribonuclease 3 (125 aa).

D11 is a catalytic residue.

The protein belongs to the MrnC RNase family. Homodimer. Requires Mg(2+) as cofactor.

It localises to the cytoplasm. Functionally, involved in correct processing of both the 5' and 3' ends of 23S rRNA precursor. Processes 30S rRNA precursor transcript even in absence of ribonuclease 3 (Rnc); Rnc processes 30S rRNA into smaller rRNA precursors. The polypeptide is Mini-ribonuclease 3 (Acholeplasma laidlawii (strain PG-8A)).